Consider the following 153-residue polypeptide: ORM1-like protein 3 (153 aa).

The tract at residues 1 to 17 (MNVGTAHSEVNPNTRVM) is important for ceramide level-sensing. Over 1–21 (MNVGTAHSEVNPNTRVMNSRG) the chain is Cytoplasmic. A run of 2 helical transmembrane segments spans residues 22–42 (IWLS…SIPF) and 43–63 (VSVP…MYIF). The Cytoplasmic segment spans residues 64–94 (LHTVKGTPFETPDQGKARLLTHWEQMDYGVQ). Residues 95–117 (FTASRKFLTITPIVLYFLTSFYT) form a helical membrane-spanning segment. Residues 118–121 (KYDQ) are Extracellular-facing. The helical transmembrane segment at 122-142 (IHFILNTVSLMSVLIPKLPQL) threads the bilayer. At P137 the chain carries Hydroxyproline. At 143 to 153 (HGVRIFGINKY) the chain is on the cytoplasmic side.

Belongs to the ORM family. In terms of assembly, ceramide-sensitive subunit of the serine palmitoyltransferase (SPT) complex, which is also composed of SPTLC1, SPTLC2/3 and SPTSSA/B. In terms of processing, when hydroxylated at Pro-137, ubiquitinated via 'Lys-48'-linkage, leading to proteasomal degradation. In endothelial cells, ORMDL3 proteasomal degradation is controlled by the sphingosine 1-phosphate receptor signaling pathway.

It localises to the endoplasmic reticulum membrane. Functionally, plays an essential role in the homeostatic regulation of sphingolipid de novo biosynthesis by modulating the activity of the serine palmitoyltransferase (SPT) in response to ceramide levels. When complexed to SPT, the binding of ceramides to its N-terminus stabilizes a conformation that block SPT substrate entry, hence preventing SPT catalytic activity. Through this mechanism, maintains ceramide levels at sufficient concentrations for the production of complex sphingolipids, but which prevents the accumulation of ceramides to levels that trigger apoptosis. The polypeptide is ORM1-like protein 3 (ORMDL3) (Bos taurus (Bovine)).